Reading from the N-terminus, the 200-residue chain is Transcriptional repressor NrdR (200 aa).

Residues 3 to 34 (CPRCGKQEIRVLESRSAEGGQSVRRRRECMSC) fold into a zinc finger. In terms of domain architecture, ATP-cone spans 49-139 (IMVIKRDGSR…VYRKFQGIKD (91 aa)). Positions 158-200 (LERPLRNSPPSESESTASPDWVGGIPQLLDQNDTSSNLSEIPK) are disordered. Residues 186–200 (LDQNDTSSNLSEIPK) show a composition bias toward polar residues.

It belongs to the NrdR family. It depends on Zn(2+) as a cofactor.

In terms of biological role, negatively regulates transcription of bacterial ribonucleotide reductase nrd genes and operons by binding to NrdR-boxes. The sequence is that of Transcriptional repressor NrdR from Synechococcus sp. (strain JA-3-3Ab) (Cyanobacteria bacterium Yellowstone A-Prime).